Here is a 220-residue protein sequence, read N- to C-terminus: Ribosomal RNA large subunit methyltransferase E (220 aa).

Residues Gly-60, Trp-62, Asp-92, Asp-108, and Asp-133 each contribute to the S-adenosyl-L-methionine site. The Proton acceptor role is filled by Lys-173. The segment at 197 to 220 (RKPKASRDKSSETFILGRQLKQPR) is disordered.

Belongs to the class I-like SAM-binding methyltransferase superfamily. RNA methyltransferase RlmE family.

The protein resides in the cytoplasm. The enzyme catalyses uridine(2552) in 23S rRNA + S-adenosyl-L-methionine = 2'-O-methyluridine(2552) in 23S rRNA + S-adenosyl-L-homocysteine + H(+). Its function is as follows. Specifically methylates the uridine in position 2552 of 23S rRNA at the 2'-O position of the ribose in the fully assembled 50S ribosomal subunit. The polypeptide is Ribosomal RNA large subunit methyltransferase E (Burkholderia ambifaria (strain MC40-6)).